The sequence spans 646 residues: UvrABC system protein C (646 aa).

Residues 16–95 form the GIY-YIG domain; the sequence is VEPGVYRFRD…IKEFDPRFNV (80 aa). Positions 208-243 constitute a UVR domain; the sequence is DRFARALEQQMNAAAEQLDFERAARLRDDLSALKRA.

This sequence belongs to the UvrC family. Interacts with UvrB in an incision complex.

The protein localises to the cytoplasm. Functionally, the UvrABC repair system catalyzes the recognition and processing of DNA lesions. UvrC both incises the 5' and 3' sides of the lesion. The N-terminal half is responsible for the 3' incision and the C-terminal half is responsible for the 5' incision. This Mycobacterium bovis (strain BCG / Pasteur 1173P2) protein is UvrABC system protein C.